A 1323-amino-acid polypeptide reads, in one-letter code: DNA-directed RNA polymerase subunit beta' (1323 aa).

Residues cysteine 60, cysteine 62, cysteine 75, and cysteine 78 each coordinate Zn(2+). Mg(2+) is bound by residues aspartate 535, aspartate 537, and aspartate 539. Residues cysteine 894, cysteine 977, cysteine 984, and cysteine 987 each contribute to the Zn(2+) site.

It belongs to the RNA polymerase beta' chain family. In terms of assembly, the RNAP catalytic core consists of 2 alpha, 1 beta, 1 beta' and 1 omega subunit. When a sigma factor is associated with the core the holoenzyme is formed, which can initiate transcription. The cofactor is Mg(2+). Requires Zn(2+) as cofactor.

The catalysed reaction is RNA(n) + a ribonucleoside 5'-triphosphate = RNA(n+1) + diphosphate. Its function is as follows. DNA-dependent RNA polymerase catalyzes the transcription of DNA into RNA using the four ribonucleoside triphosphates as substrates. The chain is DNA-directed RNA polymerase subunit beta' from Corynebacterium jeikeium (strain K411).